A 460-amino-acid chain; its full sequence is Zinc transporter 6 (460 aa).

Over 1-33 the chain is Cytoplasmic; sequence MGTIHLFRKPQRSFFGKLLQEFRLVAADRRSWK. The chain crosses the membrane as a helical span at residues 34–54; the sequence is ILLFGAINVLCTGFLLMWCSS. The Extracellular portion of the chain corresponds to 55–64; the sequence is TNSIALTAYT. A helical membrane pass occupies residues 65–85; it reads YLTIFDLFSLITCLISYWVMM. The Cytoplasmic segment spans residues 86-98; it reads RKPSPVYSFGFER. The chain crosses the membrane as a helical span at residues 99 to 119; the sequence is LEVLAVFASTVLAQLGALFIL. Topologically, residues 120–134 are extracellular; it reads KESAERFLEQPEIHT. The chain crosses the membrane as a helical span at residues 135 to 155; it reads GRLLVGTFVALSFNLFTMLSI. Residues 156 to 200 lie on the Cytoplasmic side of the membrane; the sequence is RNKPFAYVSEAASTSWLQEHVADLSRSLCGLIPGLSSIFLPRMNP. The helical transmembrane segment at 201–221 threads the bilayer; sequence FVLIDLAGAFALCITYMLIEI. The Extracellular portion of the chain corresponds to 222–223; the sequence is NN. A helical membrane pass occupies residues 224–244; sequence YFAVDTASAIAIALMTFGTMY. At 245 to 460 the chain is on the cytoplasmic side; sequence PMSVYSGKVL…GINRMGQPRP (216 aa). The segment at 371–390 is disordered; it reads TPVTSTPAKPSSPPPEFSFN.

This sequence belongs to the cation diffusion facilitator (CDF) transporter (TC 2.A.4) family. SLC30A subfamily. In terms of assembly, heterodimer with SLC30A5; form a functional zinc ion transmembrane transporter. In terms of tissue distribution, expressed in brain and liver, and to a lower extent also in lung. Highly expressed in brain (at protein level).

It is found in the golgi apparatus. It localises to the trans-Golgi network membrane. In terms of biological role, has probably no intrinsic transporter activity but together with SLC30A5 forms a functional zinc ion:proton antiporter heterodimer, mediating zinc entry into the lumen of organelles along the secretory pathway. As part of that zinc ion:proton antiporter, contributes to zinc ion homeostasis within the early secretory pathway and regulates the activation and folding of enzymes like alkaline phosphatases and enzymes involved in phosphatidylinositol glycan anchor biosynthesis. The polypeptide is Zinc transporter 6 (Slc30a6) (Mus musculus (Mouse)).